A 116-amino-acid chain; its full sequence is Large ribosomal subunit protein bL17 (116 aa).

Belongs to the bacterial ribosomal protein bL17 family. As to quaternary structure, part of the 50S ribosomal subunit. Contacts protein L32.

The protein is Large ribosomal subunit protein bL17 of Sulfurimonas denitrificans (strain ATCC 33889 / DSM 1251) (Thiomicrospira denitrificans (strain ATCC 33889 / DSM 1251)).